The chain runs to 209 residues: Thiamine-phosphate synthase (209 aa).

4-amino-2-methyl-5-(diphosphooxymethyl)pyrimidine is bound by residues 38-42 (QYRAK) and Asn-70. Mg(2+) contacts are provided by Asp-71 and Asp-90. Ser-109 provides a ligand contact to 4-amino-2-methyl-5-(diphosphooxymethyl)pyrimidine. Residue 135–137 (TST) participates in 2-[(2R,5Z)-2-carboxy-4-methylthiazol-5(2H)-ylidene]ethyl phosphate binding. Lys-138 is a 4-amino-2-methyl-5-(diphosphooxymethyl)pyrimidine binding site. Residues Gly-165 and 185 to 186 (VS) contribute to the 2-[(2R,5Z)-2-carboxy-4-methylthiazol-5(2H)-ylidene]ethyl phosphate site.

The protein belongs to the thiamine-phosphate synthase family. The cofactor is Mg(2+).

It carries out the reaction 2-[(2R,5Z)-2-carboxy-4-methylthiazol-5(2H)-ylidene]ethyl phosphate + 4-amino-2-methyl-5-(diphosphooxymethyl)pyrimidine + 2 H(+) = thiamine phosphate + CO2 + diphosphate. The catalysed reaction is 2-(2-carboxy-4-methylthiazol-5-yl)ethyl phosphate + 4-amino-2-methyl-5-(diphosphooxymethyl)pyrimidine + 2 H(+) = thiamine phosphate + CO2 + diphosphate. It catalyses the reaction 4-methyl-5-(2-phosphooxyethyl)-thiazole + 4-amino-2-methyl-5-(diphosphooxymethyl)pyrimidine + H(+) = thiamine phosphate + diphosphate. It functions in the pathway cofactor biosynthesis; thiamine diphosphate biosynthesis; thiamine phosphate from 4-amino-2-methyl-5-diphosphomethylpyrimidine and 4-methyl-5-(2-phosphoethyl)-thiazole: step 1/1. Condenses 4-methyl-5-(beta-hydroxyethyl)thiazole monophosphate (THZ-P) and 2-methyl-4-amino-5-hydroxymethyl pyrimidine pyrophosphate (HMP-PP) to form thiamine monophosphate (TMP). This Persephonella marina (strain DSM 14350 / EX-H1) protein is Thiamine-phosphate synthase.